Consider the following 325-residue polypeptide: Aldo-keto reductase family 1 member A1 (325 aa).

A2 bears the N-acetylalanine mark. S4 is modified (phosphoserine). Residues 11–20, T21, and W22 each bind NADP(+); that span reads GQKMPLIGLG. S38 carries the post-translational modification Phosphoserine. D45 contributes to the NADP(+) binding site. The Proton donor role is filled by Y50. Residue K127 is modified to N6-acetyllysine; alternate. K127 carries the post-translational modification N6-succinyllysine; alternate. 12 residues coordinate NADP(+): S162, N163, S211, L213, S215, S216, K263, S264, V265, T266, R269, and N273. S211 is subject to Phosphoserine.

The protein belongs to the aldo/keto reductase family. In terms of assembly, monomer.

The protein resides in the cytoplasm. The protein localises to the cytosol. Its subcellular location is the apical cell membrane. The enzyme catalyses a primary alcohol + NADP(+) = an aldehyde + NADPH + H(+). The catalysed reaction is L-gulonate + NADP(+) = aldehydo-D-glucuronate + NADPH + H(+). It carries out the reaction L-gulono-1,4-lactone + NADP(+) = D-glucurono-3,6-lactone + NADPH + H(+). It catalyses the reaction allyl alcohol + NADP(+) = acrolein + NADPH + H(+). The enzyme catalyses glycerol + NADP(+) = D-glyceraldehyde + NADPH + H(+). The catalysed reaction is glycerol + NADP(+) = L-glyceraldehyde + NADPH + H(+). It carries out the reaction hydroxyacetone + NADP(+) = methylglyoxal + NADPH + H(+). It catalyses the reaction 3-deoxyfructose + NADP(+) = 3-deoxyglucosone + NADPH + H(+). The enzyme catalyses (R)-mevalonate + NADP(+) = (R)-mevaldate + NADPH + H(+). The catalysed reaction is pyridine 3-methanol + NADP(+) = pyridine-3-carbaldehyde + NADPH + H(+). It carries out the reaction S-nitroso-CoA + NADPH + H(+) = sulfinamide-CoA + NADP(+). It catalyses the reaction S-nitrosoglutathione + NADPH + H(+) = S-(hydroxysulfenamide)glutathione + NADP(+). In terms of biological role, catalyzes the NADPH-dependent reduction of a wide variety of carbonyl-containing compounds to their corresponding alcohols. Displays enzymatic activity towards endogenous metabolites such as aromatic and aliphatic aldehydes, ketones, monosaccharides and bile acids, with a preference for negatively charged substrates, such as glucuronate and succinic semialdehyde. Plays an important role in ascorbic acid biosynthesis by catalyzing the reduction of D-glucuronic acid and D-glucurono-gamma-lactone. Functions as a detoxifiying enzyme by reducing a range of toxic aldehydes. Reduces methylglyoxal and 3-deoxyglucosone, which are present at elevated levels under hyperglycemic conditions and are cytotoxic. Involved also in the detoxification of lipid-derived aldehydes like acrolein. Plays a role in the activation of procarcinogens, such as polycyclic aromatic hydrocarbon trans-dihydrodiols, and in the metabolism of various xenobiotics and drugs. Also acts as an inhibitor of protein S-nitrosylation by mediating degradation of S-nitroso-coenzyme A (S-nitroso-CoA), a cofactor required to S-nitrosylate proteins. S-nitroso-CoA reductase activity is involved in reprogramming intermediary metabolism in renal proximal tubules, notably by inhibiting protein S-nitrosylation of isoform 2 of PKM (PKM2). Also acts as a S-nitroso-glutathione reductase by catalyzing the NADPH-dependent reduction of S-nitrosoglutathione. Displays no reductase activity towards retinoids. The chain is Aldo-keto reductase family 1 member A1 from Bos taurus (Bovine).